A 453-amino-acid chain; its full sequence is Choline kinase alpha (453 aa).

Residues 22-81 are disordered; it reads CGGNAAPTPGVGQQRDAAGELESKQLGGRTQPLALPPPPPPPLPLPPPPSPPLADEQPEP. The span at 55–73 shows a compositional bias: pro residues; the sequence is ALPPPPPPPLPLPPPPSPP. Ser71 carries the post-translational modification Phosphoserine. ATP-binding positions include 113–119, Arg142, and 203–209; these read RGGLSNM and QFIPSRR. Residue 115–117 participates in phosphocholine binding; that stretch reads GLS. N6-acetyllysine is present on Lys243. Position 275 is a phosphoserine (Ser275). Residues Gln304 and Asp326 each coordinate ATP.

It belongs to the choline/ethanolamine kinase family. Homodimer. Heterodimer with CHKB. In terms of assembly, monomer; acetylation by KAT5 promotes dissociation of the homodimer and monomerization. Post-translationally, phosphorylated at Ser-275 by AMPK in response to glucose deprivation, leading to localization to lipid droplets. In terms of processing, acetylated by KAT5 at Lys-243 following phosphorylation by AMPK, leading to monomerization and conversion into a tyrosine-protein kinase. Expressed ubiquitously with the highest level in testis.

It is found in the cytoplasm. The protein localises to the cytosol. The protein resides in the lipid droplet. It catalyses the reaction choline + ATP = phosphocholine + ADP + H(+). It carries out the reaction ethanolamine + ATP = phosphoethanolamine + ADP + H(+). The catalysed reaction is L-tyrosyl-[protein] + ATP = O-phospho-L-tyrosyl-[protein] + ADP + H(+). The protein operates within phospholipid metabolism; phosphatidylcholine biosynthesis; phosphocholine from choline: step 1/1. It functions in the pathway phospholipid metabolism; phosphatidylethanolamine biosynthesis; phosphatidylethanolamine from ethanolamine: step 1/3. In terms of biological role, plays a key role in phospholipid biosynthesis by catalyzing the phosphorylation of free choline to phosphocholine, the first step in phosphatidylcholine biosynthesis. Also phosphorylates ethanolamine, thereby contributing to phosphatidylethanolamine biosynthesis. Has higher activity with choline. Its function is as follows. This isoform plays a key role in lipolysis of lipid droplets following glucose deprivation. In response to glucose deprivation, phosphorylated by AMPK, promoting localization to lipid droplets. Phosphorylation is followed by acetylation by KAT5, leading to dissociation of the homodimer into a monomer. Monomeric CHKA isoform 1 is converted into a tyrosine-protein kinase, which phosphorylates lipid droplet structural proteins PLIN2 and PLIN3, leading to lipolysis of lipid droplets. The protein is Choline kinase alpha (Chka) of Mus musculus (Mouse).